A 429-amino-acid polypeptide reads, in one-letter code: Putative F-box/kelch-repeat protein At2g21680 (429 aa).

The segment at 1 to 32 is disordered; that stretch reads MVLISETSDDGSTGGDHQIKKPKKEEDRNKKL. Positions 17–29 are enriched in basic and acidic residues; sequence HQIKKPKKEEDRN. The F-box domain maps to 37 to 84; sequence QVSLPIPEELILRCFLLVRRCHHPSLSLVCRSFHSLMSKLYDDRLRLG. Kelch repeat units lie at residues 144 to 175, 176 to 221, 222 to 267, 269 to 313, and 315 to 359; these read DIYV…RRGE, TSIR…VIDG, KIYV…LTYA, MKEK…VVDN, and LFCI…DGYK.

In Arabidopsis thaliana (Mouse-ear cress), this protein is Putative F-box/kelch-repeat protein At2g21680.